Here is a 536-residue protein sequence, read N- to C-terminus: MELTLWTYEGPPHVGAMRIASSMEGVHYVLHAPQGDTYADLLFTMIERRGRRPPVTYTTFQARDLGGDTAELVKGHLREAVERFNPEALLVGESCTAELIQDQPGSLASGMGFNMPVVGIELPAYSKKENWGASETFYQLVRGILSKQPSEESGVSHSPAAWKSEGRRPRVNLLGPTLLGFRCRDDILELEKLLNQHGIDVHVVAPLEARPADLMRLPNADLNVCLYPEIAEATCLWLERNYGMPFSKTVPIGVGATKDFLEELHQLLEMPAPNPGEGAEQSKLPWYSQSVDSNYLTGKRVFIFGDGTHAIAAARIADQELGFKVVGLGTYSREMARPVRAAAKELGLEALISDDYLAVEAAMAEAAPELVLGTQMERHSAKRLGIPCAVISTPMHVQDVPARYSPQMGWEGANVIFDSWVHPLMMGLEEHLIGMFRHDFEFVDGHQSHLGHLGGHQSQTEQQQSQAATNPSTQSNTDSSSEESPLWTPEGEAELAKIPFFVRGKVRRNTEKYARQAGCRRIDSETVYDAKVHFRA.

D36 is a [4Fe-4S] cluster binding site. The active-site Proton donor is D292. Position 427–428 (427–428 (GL)) interacts with substrate. The interval 447-489 (QSHLGHLGGHQSQTEQQQSQAATNPSTQSNTDSSSEESPLWTP) is disordered. A compositionally biased stretch (low complexity) spans 448–469 (SHLGHLGGHQSQTEQQQSQAAT). Over residues 470–483 (NPSTQSNTDSSSEE) the composition is skewed to polar residues.

It belongs to the ChlB/BchB/BchZ family. Protochlorophyllide reductase is composed of three subunits; ChlL, ChlN and ChlB. Forms a heterotetramer of two ChlB and two ChlN subunits. [4Fe-4S] cluster is required as a cofactor.

It catalyses the reaction chlorophyllide a + oxidized 2[4Fe-4S]-[ferredoxin] + 2 ADP + 2 phosphate = protochlorophyllide a + reduced 2[4Fe-4S]-[ferredoxin] + 2 ATP + 2 H2O. It functions in the pathway porphyrin-containing compound metabolism; chlorophyll biosynthesis (light-independent). In terms of biological role, component of the dark-operative protochlorophyllide reductase (DPOR) that uses Mg-ATP and reduced ferredoxin to reduce ring D of protochlorophyllide (Pchlide) to form chlorophyllide a (Chlide). This reaction is light-independent. The NB-protein (ChlN-ChlB) is the catalytic component of the complex. The polypeptide is Light-independent protochlorophyllide reductase subunit B (Prochlorococcus marinus (strain MIT 9303)).